The following is a 1714-amino-acid chain: uncharacterized protein (1714 aa).

2 disordered regions span residues 47-70 (SVAGSEKNASDDDSDASSVMSDDL) and 584-616 (KKTGKGGWSGQKQQKPGAGGKKGATKESGKSKK). ATP is bound by residues 607–614 (ATKESGKS) and 806–813 (APTSAGKT). Residues 607–616 (ATKESGKSKK) are compositionally biased toward basic and acidic residues. One can recognise a Helicase ATP-binding domain in the interval 793–963 (LDSVDRGNSA…WLNSSEQAKS (171 aa)). Residues 913–916 (DEVH) carry the DEVH box motif. The interval 1197–1223 (KRKRDDAEKKKKGDKDEDAGPEKDDDE) is disordered. Over residues 1199–1218 (KRDDAEKKKKGDKDEDAGPE) the composition is skewed to basic and acidic residues. Residues 1237–1391 (ALERFKLRGR…NPPFTVLFLL (155 aa)) form the Helicase C-terminal domain.

Belongs to the helicase family. SKI2 subfamily.

Its subcellular location is the nucleus. This is an uncharacterized protein from Caenorhabditis elegans.